The primary structure comprises 265 residues: Mlc titration factor A (265 aa).

The Zn(2+) site is built by His111, His148, His152, and Glu211.

The protein belongs to the MtfA family. Interacts with Mlc. It depends on Zn(2+) as a cofactor.

The protein resides in the cytoplasm. In terms of biological role, involved in the modulation of the activity of the glucose-phosphotransferase system (glucose-PTS). Interacts with the transcriptional repressor Mlc, preventing its interaction with DNA and leading to the modulation of expression of genes regulated by Mlc, including ptsG, which encodes the PTS system glucose-specific EIICB component. Functionally, shows zinc-dependent metallopeptidase activity. The polypeptide is Mlc titration factor A (Escherichia coli O139:H28 (strain E24377A / ETEC)).